The following is a 320-amino-acid chain: GTP 3',8-cyclase (320 aa).

In terms of domain architecture, Radical SAM core spans 5-225 (QFDRKINYLR…IQLIKKDEKA (221 aa)). Residue Arg14 coordinates GTP. The [4Fe-4S] cluster site is built by Cys21 and Cys25. Tyr27 lines the S-adenosyl-L-methionine pocket. Cys28 lines the [4Fe-4S] cluster pocket. Arg64 lines the GTP pocket. Gly68 is a binding site for S-adenosyl-L-methionine. Thr95 is a binding site for GTP. Residue Ser119 coordinates S-adenosyl-L-methionine. GTP is bound at residue Lys155. Met189 is an S-adenosyl-L-methionine binding site. Cys248 and Cys251 together coordinate [4Fe-4S] cluster. Residue 253–255 (RIR) coordinates GTP. A [4Fe-4S] cluster-binding site is contributed by Cys265.

The protein belongs to the radical SAM superfamily. MoaA family. Monomer and homodimer. [4Fe-4S] cluster is required as a cofactor.

It carries out the reaction GTP + AH2 + S-adenosyl-L-methionine = (8S)-3',8-cyclo-7,8-dihydroguanosine 5'-triphosphate + 5'-deoxyadenosine + L-methionine + A + H(+). It participates in cofactor biosynthesis; molybdopterin biosynthesis. Its function is as follows. Catalyzes the cyclization of GTP to (8S)-3',8-cyclo-7,8-dihydroguanosine 5'-triphosphate. The chain is GTP 3',8-cyclase from Campylobacter jejuni subsp. doylei (strain ATCC BAA-1458 / RM4099 / 269.97).